Reading from the N-terminus, the 705-residue chain is uncharacterized protein (705 aa).

This is an uncharacterized protein from Acanthamoeba polyphaga (Amoeba).